The chain runs to 509 residues: Glycogen synthase (509 aa).

Residue K47 participates in ADP-alpha-D-glucose binding.

It belongs to the glycosyltransferase 1 family. Bacterial/plant glycogen synthase subfamily.

It carries out the reaction [(1-&gt;4)-alpha-D-glucosyl](n) + ADP-alpha-D-glucose = [(1-&gt;4)-alpha-D-glucosyl](n+1) + ADP + H(+). It functions in the pathway glycan biosynthesis; glycogen biosynthesis. Functionally, synthesizes alpha-1,4-glucan chains using ADP-glucose. In Xanthomonas oryzae pv. oryzae (strain MAFF 311018), this protein is Glycogen synthase.